The chain runs to 172 residues: Adrenodoxin homolog, mitochondrial (172 aa).

Residues 1-16 constitute a mitochondrion transit peptide; that stretch reads MLKIVTRAGHTARISN. Residues 61-163 enclose the 2Fe-2S ferredoxin-type domain; the sequence is LKITFILKDG…GIRVALPQMT (103 aa). Cys98, Cys104, Cys107, and Cys144 together coordinate [2Fe-2S] cluster.

Belongs to the adrenodoxin/putidaredoxin family. Interacts in its reduced state with the apo form of ISU1. Requires [2Fe-2S] cluster as cofactor.

The protein localises to the mitochondrion matrix. Functionally, iron-sulfur protein that transfers electrons in a wide variety of metabolic reactions. Involved in heme A biosynthesis and in iron-sulfur cluster assembly. Transfers electrons from adrenodoxin reductase ARH1 to heme A synthase COX15, a heme protein that catalyzes the conversion of heme O to heme A. Required for the de novo synthesis of Fe-S clusters on iron sulfur cluster assembly protein ISU1. Interact in its reduced state with ISU1 to productively deliver electrons for Fe-S cluster synthesis. Essential for coenzyme Q biosynthesis. May transfer the electrons required for the hydroxylation reaction performed by COQ6. This Saccharomyces cerevisiae (strain ATCC 204508 / S288c) (Baker's yeast) protein is Adrenodoxin homolog, mitochondrial.